The primary structure comprises 62 residues: Arabinogalactan protein 40 (62 aa).

The signal sequence occupies residues Met1–Ala22. A 4-hydroxyproline mark is found at Pro28, Pro30, and Pro32. Residues Pro28, Pro30, and Pro32 are each glycosylated (O-linked (Ara...) hydroxyproline). A lipid anchor (GPI-anchor amidated serine) is attached at Ser35. Residues Ser36–Gln62 constitute a propeptide, removed in mature form.

Belongs to the AG-peptide AGP family. Post-translationally, contains 4-hydroxyproline; hydroxylated on Pro-28, Pro-30 and Pro-32. O-glycosylated on hydroxyprolines; noncontiguous hydroxylproline residues are glycosylated with arabinogalactan.

The protein localises to the cell membrane. Its function is as follows. Proteoglycan that seems to be implicated in diverse developmental roles such as differentiation, cell-cell recognition, embryogenesis and programmed cell death. In Arabidopsis thaliana (Mouse-ear cress), this protein is Arabinogalactan protein 40.